The following is a 207-amino-acid chain: Large ribosomal subunit protein uL4 (207 aa).

The tract at residues 48–87 is disordered; it reads THAVKNRSAVSGGGKKPWRQKGTGRARQGSIRSPQFRGGG.

This sequence belongs to the universal ribosomal protein uL4 family. As to quaternary structure, part of the 50S ribosomal subunit.

In terms of biological role, one of the primary rRNA binding proteins, this protein initially binds near the 5'-end of the 23S rRNA. It is important during the early stages of 50S assembly. It makes multiple contacts with different domains of the 23S rRNA in the assembled 50S subunit and ribosome. Its function is as follows. Forms part of the polypeptide exit tunnel. This is Large ribosomal subunit protein uL4 from Limosilactobacillus reuteri subsp. reuteri (strain JCM 1112) (Lactobacillus reuteri).